The following is a 426-amino-acid chain: Gamma-glutamyl phosphate reductase (426 aa).

The protein belongs to the gamma-glutamyl phosphate reductase family.

It is found in the cytoplasm. The enzyme catalyses L-glutamate 5-semialdehyde + phosphate + NADP(+) = L-glutamyl 5-phosphate + NADPH + H(+). It participates in amino-acid biosynthesis; L-proline biosynthesis; L-glutamate 5-semialdehyde from L-glutamate: step 2/2. Its function is as follows. Catalyzes the NADPH-dependent reduction of L-glutamate 5-phosphate into L-glutamate 5-semialdehyde and phosphate. The product spontaneously undergoes cyclization to form 1-pyrroline-5-carboxylate. This Cupriavidus pinatubonensis (strain JMP 134 / LMG 1197) (Cupriavidus necator (strain JMP 134)) protein is Gamma-glutamyl phosphate reductase.